Here is a 145-residue protein sequence, read N- to C-terminus: D-aminoacyl-tRNA deacylase (145 aa).

Positions 137 to 138 (GP) match the Gly-cisPro motif, important for rejection of L-amino acids motif.

This sequence belongs to the DTD family. As to quaternary structure, homodimer.

The protein localises to the cytoplasm. The catalysed reaction is glycyl-tRNA(Ala) + H2O = tRNA(Ala) + glycine + H(+). The enzyme catalyses a D-aminoacyl-tRNA + H2O = a tRNA + a D-alpha-amino acid + H(+). Functionally, an aminoacyl-tRNA editing enzyme that deacylates mischarged D-aminoacyl-tRNAs. Also deacylates mischarged glycyl-tRNA(Ala), protecting cells against glycine mischarging by AlaRS. Acts via tRNA-based rather than protein-based catalysis; rejects L-amino acids rather than detecting D-amino acids in the active site. By recycling D-aminoacyl-tRNA to D-amino acids and free tRNA molecules, this enzyme counteracts the toxicity associated with the formation of D-aminoacyl-tRNA entities in vivo and helps enforce protein L-homochirality. The sequence is that of D-aminoacyl-tRNA deacylase from Chromohalobacter salexigens (strain ATCC BAA-138 / DSM 3043 / CIP 106854 / NCIMB 13768 / 1H11).